The primary structure comprises 485 residues: Adenosylhomocysteinase (485 aa).

Positions 64, 139, and 205 each coordinate substrate. Position 206 to 208 (206 to 208 (TTT)) interacts with NAD(+). 2 residues coordinate substrate: lysine 235 and aspartate 239. NAD(+) is bound by residues asparagine 240, 269 to 274 (GYGDVG), glutamate 292, asparagine 327, 348 to 350 (IGH), and asparagine 397.

Belongs to the adenosylhomocysteinase family. In terms of assembly, homotetramer. NAD(+) serves as cofactor.

It catalyses the reaction S-adenosyl-L-homocysteine + H2O = L-homocysteine + adenosine. The protein operates within amino-acid biosynthesis; L-homocysteine biosynthesis; L-homocysteine from S-adenosyl-L-homocysteine: step 1/1. Functionally, adenosylhomocysteine is a competitive inhibitor of S-adenosyl-L-methionine-dependent methyl transferase reactions; therefore adenosylhomocysteinase may play a key role in the control of methylations via regulation of the intracellular concentration of adenosylhomocysteine. The sequence is that of Adenosylhomocysteinase (SAHH) from Triticum aestivum (Wheat).